A 434-amino-acid polypeptide reads, in one-letter code: D-amino acid dehydrogenase (434 aa).

Residue 3–17 (VLVLGSGVIGTASAY) coordinates FAD.

This sequence belongs to the DadA oxidoreductase family. FAD is required as a cofactor.

It carries out the reaction a D-alpha-amino acid + A + H2O = a 2-oxocarboxylate + AH2 + NH4(+). The protein operates within amino-acid degradation; D-alanine degradation; NH(3) and pyruvate from D-alanine: step 1/1. Oxidative deamination of D-amino acids. The protein is D-amino acid dehydrogenase of Pseudomonas entomophila (strain L48).